The sequence spans 388 residues: Chorismate synthase (388 aa).

Residues Arg-39 and Arg-45 each contribute to the NADP(+) site. FMN-binding positions include 130–132, 251–252, Gly-296, 311–315, and Arg-337; these read RSS, NA, and KPIPT.

It belongs to the chorismate synthase family. Homotetramer. FMNH2 is required as a cofactor.

The catalysed reaction is 5-O-(1-carboxyvinyl)-3-phosphoshikimate = chorismate + phosphate. Its pathway is metabolic intermediate biosynthesis; chorismate biosynthesis; chorismate from D-erythrose 4-phosphate and phosphoenolpyruvate: step 7/7. In terms of biological role, catalyzes the anti-1,4-elimination of the C-3 phosphate and the C-6 proR hydrogen from 5-enolpyruvylshikimate-3-phosphate (EPSP) to yield chorismate, which is the branch point compound that serves as the starting substrate for the three terminal pathways of aromatic amino acid biosynthesis. This reaction introduces a second double bond into the aromatic ring system. The protein is Chorismate synthase of Streptococcus suis (strain 98HAH33).